The chain runs to 150 residues: Deoxyuridine 5'-triphosphate nucleotidohydrolase (150 aa).

Residues 69–71 (RSG), Asn82, 86–88 (LID), and Lys96 contribute to the substrate site.

It belongs to the dUTPase family. Requires Mg(2+) as cofactor.

It catalyses the reaction dUTP + H2O = dUMP + diphosphate + H(+). Its pathway is pyrimidine metabolism; dUMP biosynthesis; dUMP from dCTP (dUTP route): step 2/2. Functionally, this enzyme is involved in nucleotide metabolism: it produces dUMP, the immediate precursor of thymidine nucleotides and it decreases the intracellular concentration of dUTP so that uracil cannot be incorporated into DNA. This Neisseria gonorrhoeae (strain ATCC 700825 / FA 1090) protein is Deoxyuridine 5'-triphosphate nucleotidohydrolase.